The following is a 440-amino-acid chain: MVSSNQDLLISPSIPYGEIAVPPSKSHSLRAILFASLSKGTSIIENCLFSPDSQAMLTACEKMGAHVRRIGDSLHIQGNPDPHHCHPRYFHMGNSGIALRFLTALSTLSPTPTLITGSHTLKRRPIAPLLSSLKQLGAHIRQKTSSSIPFTIHGPLSPGHVTISGQDSQYASALAITAALAPYPLSFSIENLKERPWFDLTLDWLHSLNISFLRDQDSLTFPGGQSLESFSYSVPGDYSSAAFLASFGLLSSSSKPTILRNLSSQDSQGDKLLFSLLKQLGAHILIGKHHIEMHPSSFSGGEIDMDPFIDALPILAVLCCFAKNPSRLYNALGAKDKESNRIEAIAHELQKMGGSVHPTRDGLYIKPSRLHGAVVDSHNDHRIAMALAVAGVHASSGQTLLCNTQCINKSFPYFVIAAQTLHANVRHYQADFPLRSSFCR.

3-phosphoshikimate-binding residues include K25, S26, and R30. Phosphoenolpyruvate is bound at residue K25. Phosphoenolpyruvate contacts are provided by G96 and R124. The 3-phosphoshikimate site is built by S168, Q169, D310, and K337. Position 169 (Q169) interacts with phosphoenolpyruvate. Catalysis depends on D310, which acts as the Proton acceptor. The phosphoenolpyruvate site is built by R341, R382, and K409.

The protein belongs to the EPSP synthase family. Monomer.

Its subcellular location is the cytoplasm. It carries out the reaction 3-phosphoshikimate + phosphoenolpyruvate = 5-O-(1-carboxyvinyl)-3-phosphoshikimate + phosphate. Its pathway is metabolic intermediate biosynthesis; chorismate biosynthesis; chorismate from D-erythrose 4-phosphate and phosphoenolpyruvate: step 6/7. Its function is as follows. Catalyzes the transfer of the enolpyruvyl moiety of phosphoenolpyruvate (PEP) to the 5-hydroxyl of shikimate-3-phosphate (S3P) to produce enolpyruvyl shikimate-3-phosphate and inorganic phosphate. The sequence is that of 3-phosphoshikimate 1-carboxyvinyltransferase from Chlamydia trachomatis serovar A (strain ATCC VR-571B / DSM 19440 / HAR-13).